The following is a 435-amino-acid chain: MSIITDVYAREVLDSRGNPTLEVEVYTESGAFGRGMVPSGASTGEHEAVELRDGDKSRYNGLGTEKAVDNVNNIIAEAIIGYDVRDQQAIDRAMIALDGTPNKGKLGANAILGVSIAVARAAADYLEVPLYNYLGGFNTKVLPTPMMNIVNGGSHSDAPIAFQEFMIMPVGASTFKEALRWGAEVFHALKKILKERGLETAVGDEGGFAPKFEGTEDGVETILKAIEAAGYEAGENGIMIGFDCASSEFYDKERKVYDYTKFEGEGAAVRTSAEQIDYLEELVNKYPIITIEDGMDENDWDGWKALTERLGGRVQLVGDDFFVTNTDYLARGIKEEAANSILIKVNQIGTLTETFEAIEMAKEAGYTAVVSHRSGETEDSTIADIAVATNAGQIKTGSLSRTDRIAKYNQLLRIEDQLGEVAQYKGIKSFYNLKK.

Q163 is a binding site for (2R)-2-phosphoglycerate. E205 functions as the Proton donor in the catalytic mechanism. Positions 243, 292, and 319 each coordinate Mg(2+). The (2R)-2-phosphoglycerate site is built by K344, R373, S374, and K395. The active-site Proton acceptor is the K344.

This sequence belongs to the enolase family. The cofactor is Mg(2+).

Its subcellular location is the cytoplasm. It localises to the secreted. The protein resides in the cell surface. It catalyses the reaction (2R)-2-phosphoglycerate = phosphoenolpyruvate + H2O. The protein operates within carbohydrate degradation; glycolysis; pyruvate from D-glyceraldehyde 3-phosphate: step 4/5. Catalyzes the reversible conversion of 2-phosphoglycerate (2-PG) into phosphoenolpyruvate (PEP). It is essential for the degradation of carbohydrates via glycolysis. This Streptococcus uberis (strain ATCC BAA-854 / 0140J) protein is Enolase.